We begin with the raw amino-acid sequence, 906 residues long: Protein transport protein SEC24-2 (906 aa).

Positions 222, 225, 244, and 247 each coordinate Zn(2+). The tract at residues 222–247 (CRRCRSYMNPFVTFIEQGRRWRCNFC) is zinc finger-like.

It belongs to the SEC23/SEC24 family. SEC24 subfamily. In terms of assembly, the COPII coat is composed of at least 5 proteins: the SEC23/24 complex, the SEC13/31 complex, and the protein SAR1. Golgi apparatus membrane; Peripheral membrane protein; Cytoplasmic side.

The protein localises to the cytoplasm. The protein resides in the cytoplasmic vesicle. It localises to the COPII-coated vesicle membrane. It is found in the endoplasmic reticulum membrane. Its subcellular location is the golgi apparatus membrane. Component of the coat protein complex II (COPII) which promotes the formation of transport vesicles from the endoplasmic reticulum (ER). The coat has two main functions, the physical deformation of the endoplasmic reticulum membrane into vesicles and the selection of cargo molecules. This Candida glabrata (strain ATCC 2001 / BCRC 20586 / JCM 3761 / NBRC 0622 / NRRL Y-65 / CBS 138) (Yeast) protein is Protein transport protein SEC24-2 (SEC242).